Reading from the N-terminus, the 245-residue chain is MDGSRTSLDIEEYSNTEVQKNQVLTLEEWQDKWVNGKTAFHLEQGHQLLKKHLDTFLKGKSGLRVFFPLCGKAVEMKWFANRGHSVVGVEISELGIREFFTEQNLSYTEEPITEIPGAKVFKSSSGNISLYCCSIFDFPRTNIGKLDMIWDRGALVAVNPGDRKRYADTMLSLLGKKFQCLLCVFSYDPTKHPGPPFYVPHAEIERLFGKICNIHCLEKVDAFEERHKSWGIDYLLEKLYLLTEK.

The residue at position 14 (Ser14) is a Phosphoserine. 29-40 (WQDKWVNGKTAF) is an S-adenosyl-L-methionine binding site. Phe40 serves as a coordination point for substrate. Residue Lys58 is modified to N6-acetyllysine. Residues Leu69, Glu90, 134 to 135 (SI), and Arg152 each bind S-adenosyl-L-methionine.

This sequence belongs to the class I-like SAM-binding methyltransferase superfamily. TPMT family. As to quaternary structure, monomer.

The protein localises to the cytoplasm. The enzyme catalyses S-adenosyl-L-methionine + a thiopurine = S-adenosyl-L-homocysteine + a thiopurine S-methylether.. The protein is Thiopurine S-methyltransferase (TPMT) of Chlorocebus aethiops (Green monkey).